The chain runs to 139 residues: 3-hydroxyacyl-[acyl-carrier-protein] dehydratase FabZ (139 aa).

Residue His-46 is part of the active site.

It belongs to the thioester dehydratase family. FabZ subfamily.

It localises to the cytoplasm. The catalysed reaction is a (3R)-hydroxyacyl-[ACP] = a (2E)-enoyl-[ACP] + H2O. In terms of biological role, involved in unsaturated fatty acids biosynthesis. Catalyzes the dehydration of short chain beta-hydroxyacyl-ACPs and long chain saturated and unsaturated beta-hydroxyacyl-ACPs. This Petrotoga mobilis (strain DSM 10674 / SJ95) protein is 3-hydroxyacyl-[acyl-carrier-protein] dehydratase FabZ.